Consider the following 492-residue polypeptide: Protein nucleotidyltransferase YdiU (492 aa).

Residues glycine 91, glycine 93, arginine 94, lysine 114, aspartate 126, glycine 127, arginine 180, and arginine 187 each coordinate ATP. Aspartate 256 acts as the Proton acceptor in catalysis. The Mg(2+) site is built by asparagine 257 and aspartate 266. Aspartate 266 serves as a coordination point for ATP.

The protein belongs to the SELO family. Mg(2+) is required as a cofactor. Mn(2+) serves as cofactor.

The catalysed reaction is L-seryl-[protein] + ATP = 3-O-(5'-adenylyl)-L-seryl-[protein] + diphosphate. The enzyme catalyses L-threonyl-[protein] + ATP = 3-O-(5'-adenylyl)-L-threonyl-[protein] + diphosphate. It carries out the reaction L-tyrosyl-[protein] + ATP = O-(5'-adenylyl)-L-tyrosyl-[protein] + diphosphate. It catalyses the reaction L-histidyl-[protein] + UTP = N(tele)-(5'-uridylyl)-L-histidyl-[protein] + diphosphate. The catalysed reaction is L-seryl-[protein] + UTP = O-(5'-uridylyl)-L-seryl-[protein] + diphosphate. The enzyme catalyses L-tyrosyl-[protein] + UTP = O-(5'-uridylyl)-L-tyrosyl-[protein] + diphosphate. Functionally, nucleotidyltransferase involved in the post-translational modification of proteins. It can catalyze the addition of adenosine monophosphate (AMP) or uridine monophosphate (UMP) to a protein, resulting in modifications known as AMPylation and UMPylation. The protein is Protein nucleotidyltransferase YdiU of Synechococcus elongatus (strain ATCC 33912 / PCC 7942 / FACHB-805) (Anacystis nidulans R2).